A 177-amino-acid polypeptide reads, in one-letter code: Thymidine kinase (177 aa).

11-18 (GPMFSGKS) contributes to the ATP binding site. The Proton acceptor role is filled by glutamate 83. Residue phenylalanine 113 coordinates substrate. Zn(2+) contacts are provided by cysteine 138 and cysteine 141. 157–161 (IEIIG) contacts substrate. Zn(2+) is bound by residues cysteine 170 and cysteine 173.

It belongs to the thymidine kinase family. Homotetramer. Two molecules of substrate bind to each enzyme tetramer.

The enzyme catalyses thymidine + ATP = dTMP + ADP + H(+). In terms of biological role, phosphorylates thymidine and thymidine analogs, such as azidothymidine (AZT). Part of the salvage pathway for pyrimidine deoxyribonucleotide synthesis. In Vaccinia virus (strain Copenhagen) (VACV), this protein is Thymidine kinase (OPG101).